The sequence spans 192 residues: MVRMFWLLTTFAYLLGSLSFAILLSRLSGRPDPRASGSGNAGATNMLRLAGKKLAILTLLGDLCKGLVPILIASTLSMDIAQQGWIGVCAVLGHLFPVYFRFRGGKGVATAAGVLLGLYPPAAALAIVAWLLTLYLTRTSSLAALIATPLTLPLLAWQEPHALLPMSVLTLLIVWRHRGNLRDLLAGRERHF.

A run of 5 helical transmembrane segments spans residues M4–L24, L54–S74, I80–F100, A112–L132, and L154–V174.

The protein belongs to the PlsY family. As to quaternary structure, probably interacts with PlsX.

The protein localises to the cell inner membrane. It carries out the reaction an acyl phosphate + sn-glycerol 3-phosphate = a 1-acyl-sn-glycero-3-phosphate + phosphate. The protein operates within lipid metabolism; phospholipid metabolism. In terms of biological role, catalyzes the transfer of an acyl group from acyl-phosphate (acyl-PO(4)) to glycerol-3-phosphate (G3P) to form lysophosphatidic acid (LPA). This enzyme utilizes acyl-phosphate as fatty acyl donor, but not acyl-CoA or acyl-ACP. This Pseudomonas syringae pv. syringae (strain B728a) protein is Glycerol-3-phosphate acyltransferase.